Reading from the N-terminus, the 292-residue chain is Putative OX-2 membrane glycoprotein homolog (292 aa).

A signal peptide spans 1–18; that stretch reads MSPLMLRLLPLLCIIISA. The Ig-like V-type domain occupies 24–136; that stretch reads PETSPSLVYE…TFTVDNEKTS (113 aa). C42 and C126 form a disulfide bridge. 4 N-linked (GlcNAc...) asparagine; by host glycosylation sites follow: N45, N57, N72, and N195. An Ig-like C2-type domain is found at 147–237; sequence PIVVLYFRYL…TNQKASALVT (91 aa). A helical transmembrane segment spans residues 263-283; the sequence is VFTWIVPLILILIISVMVLLI.

It localises to the host membrane. This is Putative OX-2 membrane glycoprotein homolog (U85) from Human herpesvirus 6B (strain Z29) (HHV-6 variant B).